The following is a 564-amino-acid chain: MPETPNKVLIIGSGPIIVGQAAEFDYSGSQACKALREEGVEVVLVNSNPATIMTDPNMADRVYLEPLDARIVAKIIEEERPDGILPTLGGQTGLNIAVELDEMGVLEEYDVEVLGTSVETIVRAEDRDEFRAFMKKIGEPVCASEAVSSVEEAKEVAEEIGYPVVVRPAYTLGGTGGGIAEDEEELKRVVERGLEYSRVNQVLIEEYVGGWAEIEYEVMRDGSGNCITVCSMENVDPMGVHTGESIVVAPAQTLTEEEHQMLRSAALHIIDALGVEGGCNIQFALHRETGEYRVIEVNPRVSRSSALASKATGYPIARIAAKIAIGLRLDEIENQVTGETYAAFEPALDYVVVKIPRWPFDKFPEANRTLGTEMKSVGEVMAIGRTFEEALQKAIRSLEIGEPGLGPSPEELEADPEEIRRKIETPNDRRIFCIYAALKRGLMSVEEISELSGIDPWFVEKVKRIVEMEHEIVRRKDELLEFIRTGEADEETVEFVREVKRTGFSDEQIAELLGVDEDEIREARLGVGVEATYKLVDTCAAEFAAVSPYFYSTYEEECEALRYD.

The carboxyphosphate synthetic domain stretch occupies residues 1–399; it reads MPETPNKVLI…ALQKAIRSLE (399 aa). ATP-binding residues include Arg127, Arg167, Gly173, Gly174, Glu206, Val208, Glu213, Gly239, Val240, His241, Gln282, and Glu296. An ATP-grasp domain is found at 131–325; sequence RAFMKKIGEP…IARIAAKIAI (195 aa). Gln282, Glu296, and Asn298 together coordinate Mg(2+). The Mn(2+) site is built by Gln282, Glu296, and Asn298. The tract at residues 400 to 560 is oligomerization domain; sequence IGEPGLGPSP…YSTYEEECEA (161 aa).

Belongs to the CarB family. As to quaternary structure, composed of two chains; the small (or glutamine) chain promotes the hydrolysis of glutamine to ammonia, which is used by the large (or ammonia) chain to synthesize carbamoyl phosphate. Tetramer of heterodimers (alpha,beta)4. Mg(2+) is required as a cofactor. Mn(2+) serves as cofactor.

It carries out the reaction hydrogencarbonate + L-glutamine + 2 ATP + H2O = carbamoyl phosphate + L-glutamate + 2 ADP + phosphate + 2 H(+). The catalysed reaction is hydrogencarbonate + NH4(+) + 2 ATP = carbamoyl phosphate + 2 ADP + phosphate + 2 H(+). It functions in the pathway amino-acid biosynthesis; L-arginine biosynthesis; carbamoyl phosphate from bicarbonate: step 1/1. Its pathway is pyrimidine metabolism; UMP biosynthesis via de novo pathway; (S)-dihydroorotate from bicarbonate: step 1/3. Its function is as follows. Large subunit of the glutamine-dependent carbamoyl phosphate synthetase (CPSase). CPSase catalyzes the formation of carbamoyl phosphate from the ammonia moiety of glutamine, carbonate, and phosphate donated by ATP, constituting the first step of 2 biosynthetic pathways, one leading to arginine and/or urea and the other to pyrimidine nucleotides. The large subunit (synthetase) binds the substrates ammonia (free or transferred from glutamine from the small subunit), hydrogencarbonate and ATP and carries out an ATP-coupled ligase reaction, activating hydrogencarbonate by forming carboxy phosphate which reacts with ammonia to form carbamoyl phosphate. This chain is Carbamoyl phosphate synthase large chain, N-terminal section (carB1), found in Methanopyrus kandleri (strain AV19 / DSM 6324 / JCM 9639 / NBRC 100938).